A 347-amino-acid chain; its full sequence is Metacaspase-2 (347 aa).

Residues 1–70 (MCSLITQLCD…QPWVATPLPG (70 aa)) are regulates substrate access to the active site. His-158 is an active-site residue. Ca(2+)-binding residues include Asp-173, Asp-189, and Asp-190. Cys-213 is an active-site residue. Residue Asp-220 coordinates Ca(2+).

The protein belongs to the peptidase C14B family. In terms of assembly, monomer. Auto-proteolytic cleavage of the propeptide after Lys-55 and between the large and small subunits after Lys-268 is required for catalytic activity towards large protein substrates but is dispensable towards small oligopeptide substrates. After processing, the propeptide and the large and small subunits remain associated by non-covalent bonds. In vivo, the unprocessed enzyme appears to be the predominant form.

It is found in the recycling endosome. Its activity is regulated as follows. Activated by Ca(2+). In response to calcium binding, the 280-loop, the 280-loop, a disordered loop consisting of residues 269-275, undergoes a conformational change which stabilizes substrates in the active site. The binding to the substrate triggers the release of the N-terminal region resulting in the activation of the enzyme. Proteolytic cleavage is required for catalytic activity towards large protein substrates. In terms of biological role, cysteine protease that cleaves specifically after arginine or lysine residues. This Trypanosoma brucei brucei protein is Metacaspase-2.